Reading from the N-terminus, the 428-residue chain is Cysteine--tRNA ligase (428 aa).

C23 provides a ligand contact to Zn(2+). A 'HIGH' region motif is present at residues 25–35 (PTVYNDLHLGN). Residues C196, H221, and E225 each contribute to the Zn(2+) site. The short motif at 253–257 (KMSKS) is the 'KMSKS' region element. Position 256 (K256) interacts with ATP.

The protein belongs to the class-I aminoacyl-tRNA synthetase family. Monomer. The cofactor is Zn(2+).

It localises to the cytoplasm. It carries out the reaction tRNA(Cys) + L-cysteine + ATP = L-cysteinyl-tRNA(Cys) + AMP + diphosphate. The sequence is that of Cysteine--tRNA ligase (cysS) from Mycoplasma genitalium (strain ATCC 33530 / DSM 19775 / NCTC 10195 / G37) (Mycoplasmoides genitalium).